The primary structure comprises 337 residues: GTPase Obg (337 aa).

The 159-residue stretch at 1–159 folds into the Obg domain; the sequence is MQFIDYVKIY…RWVILELKLL (159 aa). Residues 160 to 331 form the OBG-type G domain; that stretch reads ADVGLIGLPN…LLHYLSEKVG (172 aa). GTP is bound by residues 166-173, 191-195, 213-216, 283-286, and 312-314; these read GLPNAGKS, FTTLI, DIPG, TKID, and SAV. Residues serine 173 and threonine 193 each coordinate Mg(2+).

The protein belongs to the TRAFAC class OBG-HflX-like GTPase superfamily. OBG GTPase family. As to quaternary structure, monomer. It depends on Mg(2+) as a cofactor.

The protein resides in the cytoplasm. An essential GTPase which binds GTP, GDP and possibly (p)ppGpp with moderate affinity, with high nucleotide exchange rates and a fairly low GTP hydrolysis rate. Plays a role in control of the cell cycle, stress response, ribosome biogenesis and in those bacteria that undergo differentiation, in morphogenesis control. This Thermodesulfovibrio yellowstonii (strain ATCC 51303 / DSM 11347 / YP87) protein is GTPase Obg.